The following is a 61-amino-acid chain: Large ribosomal subunit protein uL30 (61 aa).

This sequence belongs to the universal ribosomal protein uL30 family. As to quaternary structure, part of the 50S ribosomal subunit.

The sequence is that of Large ribosomal subunit protein uL30 from Thermosipho africanus (strain TCF52B).